The sequence spans 262 residues: Virulence regulon transcriptional activator VirF (262 aa).

Residues 161-258 (DQIRKIVEKN…GITPKKFYLY (98 aa)) enclose the HTH araC/xylS-type domain. 2 consecutive DNA-binding regions (H-T-H motif) follow at residues 178 to 199 (SDIS…ESEK) and 225 to 248 (INDV…NEYY).

Homodimer.

Functionally, primary regulator of plasmid-encoded virulence genes. Activates the transcription of icsA (virG) and of virB, which is an activator of the ipaABCD virulence regulon. In Shigella dysenteriae, this protein is Virulence regulon transcriptional activator VirF (virF).